A 194-amino-acid chain; its full sequence is Molybdenum cofactor guanylyltransferase (194 aa).

GTP is bound by residues 12 to 14, Lys-25, Asn-53, Asp-71, and Asp-101; that span reads LAG. Mg(2+) is bound at residue Asp-101.

It belongs to the MobA family. Monomer. Mg(2+) is required as a cofactor.

It is found in the cytoplasm. It catalyses the reaction Mo-molybdopterin + GTP + H(+) = Mo-molybdopterin guanine dinucleotide + diphosphate. Its function is as follows. Transfers a GMP moiety from GTP to Mo-molybdopterin (Mo-MPT) cofactor (Moco or molybdenum cofactor) to form Mo-molybdopterin guanine dinucleotide (Mo-MGD) cofactor. The polypeptide is Molybdenum cofactor guanylyltransferase (Escherichia coli O157:H7).